A 308-amino-acid chain; its full sequence is Putative transposon Ty5-1 protein YCL074W (308 aa).

The sequence is that of Putative transposon Ty5-1 protein YCL074W (TY5A) from Saccharomyces cerevisiae (strain ATCC 204508 / S288c) (Baker's yeast).